Here is a 1203-residue protein sequence, read N- to C-terminus: Potassium/sodium hyperpolarization-activated cyclic nucleotide-gated channel 4 (1203 aa).

A disordered region spans residues 1 to 182 (MDKLPPSMRK…QPASASCEQP (182 aa)). Residues 1–263 (MDKLPPSMRK…IIHPYSDFRF (263 aa)) lie on the Cytoplasmic side of the membrane. Residues 26–36 (MDEEEDAEEEG) show a composition bias toward acidic residues. The span at 105-117 (SRGGGSGGTGSGS) shows a compositional bias: gly residues. The segment covering 121–133 (HLHDSAEERRLIA) has biased composition (basic and acidic residues). Serine 138 carries the post-translational modification Phosphoserine. The segment covering 163–174 (ASPPPPQQPPQP) has biased composition (pro residues). Residues 209-260 (GQAGFMQRQFGAMLQPGVNKFSLRMFGSQKAVEREQERVKSAGFWIIHPYSD) form an involved in subunit assembly region. A helical transmembrane segment spans residues 264 to 286 (YWDLTMLLLMVGNLIIIPVGITF). Topologically, residues 287-293 (FKDENTT) are extracellular. The chain crosses the membrane as a helical span at residues 294–314 (PWIVFNVVSDTFFLIDLVLNF). Topologically, residues 315–336 (RTGIVVEDNTEIILDPQRIKMK) are cytoplasmic. A helical membrane pass occupies residues 337-359 (YLKSWFMVDFISSIPVDYIFLIV). Over 360-378 (ETRIDSEVYKTARALRIVR) the chain is Extracellular. A helical; Voltage-sensor transmembrane segment spans residues 379–399 (FTKILSLLRLLRLSRLIRYIH). The Cytoplasmic segment spans residues 400 to 413 (QWEEIFHMTYDLAS). The helical transmembrane segment at 414–436 (AVVRIVNLIGMMLLLCHWDGCLQ) threads the bilayer. Residues 437 to 464 (FLVPMLQDFPDDCWVSINNMVNNSWGKQ) lie on the Extracellular side of the membrane. Asparagine 458 is a glycosylation site (N-linked (GlcNAc...) asparagine). Residues 465–486 (YSYALFKAMSHMLCIGYGRQAP) constitute an intramembrane region (pore-forming). Residues 487–491 (VGMSD) lie on the Extracellular side of the membrane. A helical membrane pass occupies residues 492–517 (VWLTMLSMIVGATCYAMFIGHATALI). At 518–1203 (QSLDSSRRQY…PVRSKLPSNL (686 aa)) the chain is on the cytoplasmic side. 3',5'-cyclic GMP is bound by residues tyrosine 559, lysine 562, phenylalanine 564, and glutamate 566. The 3',5'-cyclic AMP site is built by glycine 659, glutamate 660, cysteine 662, arginine 669, threonine 670, valine 673, and arginine 710. 3 disordered regions span residues 836–856 (ALGS…SSSS), 870–897 (GLSP…TPSA), and 918–1203 (LSSS…PSNL). Composition is skewed to low complexity over residues 918–941 (LSSS…AAQP) and 966–986 (RSPS…SLGL). Residues 995–1004 (ETPPRQPEPP) are compositionally biased toward pro residues. The span at 1005 to 1028 (SLVAGASGGASPVGFTPRGGLSPP) shows a compositional bias: low complexity. A compositionally biased stretch (pro residues) spans 1029 to 1042 (GHSPGPPRTFPSAP). A compositionally biased stretch (low complexity) spans 1045-1056 (ASGSHGSLLLPP). 2 positions are modified to phosphoserine: serine 1105 and serine 1108. Gly residues predominate over residues 1122–1137 (AGGGSGGSGSSGGLGP).

It belongs to the potassium channel HCN family. In terms of assembly, homotetramer. The channel assemble into homotetramers or heteromeric complexes that contains of four pore-forming subunits. Interacts with PEX5L with a 4:4 HCN4:PEX5L stoichiometry; reduces the effects of cAMP on the voltage-dependence and rate of activation. Interacts with IRAG1; regulates HCN4 channel activity. Interacts with IRAG2; regulates HCN4 channel activity. In terms of processing, S-palmitoylated. As to expression, highly expressed in thalamus, testis and in heart, both in ventricle and atrium. Detected at much lower levels in amygdala, substantia nigra, cerebellum and hippocampus.

It localises to the cell membrane. The catalysed reaction is K(+)(in) = K(+)(out). It carries out the reaction Na(+)(in) = Na(+)(out). Activated by cAMP and to a lesser extent by cGMP and cCMP. cAMP binding causes a conformation change that leads to the assembly of an active tetramer and channel opening. Binding of cAMP removes a tonic inhibition conferred by cyclic nucleotide-binding domain (CNBD) on channel opening. Cyclic dinucleotides can modulate HCN4 channel; cyclic dinucleotides acting as potent antagonists of cAMP. Inhibited by extracellular Cs(+) ions. Auxiliary subunits can also regulate HCN4 channel. IRAG1 causes a gain-of-function by shifting HCN4 activation to more depolarized membrane potentials in the absence of cAMP. In contrast, IRAG2 causes a loss-of-function by inhibiting cAMP-dependent potentiation of HCN4 activation. Its function is as follows. Hyperpolarization-activated ion channel that are permeable to Na(+) and K(+) ions with very slow activation and inactivation. Exhibits higher selectivity for K(+) over Na(+) ions. Contributes to the native pacemaker currents in heart (If) that regulate the rhythm of heart beat. Contributes to the native pacemaker currents in neurons (Ih). May mediate responses to sour stimuli. The protein is Potassium/sodium hyperpolarization-activated cyclic nucleotide-gated channel 4 of Homo sapiens (Human).